A 985-amino-acid polypeptide reads, in one-letter code: Alpha-glucosidase (985 aa).

The signal sequence occupies residues 1–25 (MAGLKSFLASSWLLPVACGASQSIV). N-linked (GlcNAc...) asparagine glycans are attached at residues Asn-126, Asn-145, Asn-220, Asn-255, Asn-349, and Asn-424. Catalysis depends on Asp-492, which acts as the Nucleophile. Glu-495 is an active-site residue. 5 N-linked (GlcNAc...) asparagine glycosylation sites follow: Asn-508, Asn-536, Asn-539, Asn-602, and Asn-624. Asp-660 (proton donor) is an active-site residue. Residues Asn-661, Asn-835, Asn-881, Asn-929, and Asn-957 are each glycosylated (N-linked (GlcNAc...) asparagine).

It belongs to the glycosyl hydrolase 31 family.

It carries out the reaction Hydrolysis of terminal, non-reducing (1-&gt;4)-linked alpha-D-glucose residues with release of alpha-D-glucose.. Its function is as follows. Hydrolyzes malto-oligosaccharides, but has a low activity toward soluble starch. The chain is Alpha-glucosidase (agdA) from Aspergillus oryzae (strain ATCC 42149 / RIB 40) (Yellow koji mold).